We begin with the raw amino-acid sequence, 155 residues long: MFLEAAAVMKPFIGTYENKVDRKGRVSVPAKFRAVLQAAEYTTIVVRPDRERGCIEGYGMDRLERLSEATPDLLDEGTQTPSLERIYDILSDSEELPFDPTGRVVVPADLLAQAGIGETAVFVGLGRVFQIWNPTALEASRGRKPRASASQGAGA.

SpoVT-AbrB domains lie at 15 to 62 and 93 to 136; these read TYEN…GMDR and SEEL…NPTA.

It belongs to the MraZ family. In terms of assembly, forms oligomers.

The protein localises to the cytoplasm. It localises to the nucleoid. The protein is Transcriptional regulator MraZ of Rhodospirillum rubrum (strain ATCC 11170 / ATH 1.1.1 / DSM 467 / LMG 4362 / NCIMB 8255 / S1).